The following is an 86-amino-acid chain: Small ribosomal subunit protein uS17 (86 aa).

The protein belongs to the universal ribosomal protein uS17 family. Part of the 30S ribosomal subunit.

Functionally, one of the primary rRNA binding proteins, it binds specifically to the 5'-end of 16S ribosomal RNA. The sequence is that of Small ribosomal subunit protein uS17 from Chlamydia pneumoniae (Chlamydophila pneumoniae).